The sequence spans 154 residues: MAKKPVKDLKQLGHATPVPASPEEATLERVPNPHPDANYVARFTVPEFTSLCPVTGQPDFAHLVIDYVPGKWLIESKSLKLYLQSFRNHGAFHEDCTLAIGKRLAGTLAPKWLRIGGYWYPRGGIPIDVFWQKGKLPAGVWVPDQGVAPYRGRG.

Residues 1-11 (MAKKPVKDLKQ) are compositionally biased toward basic and acidic residues. A disordered region spans residues 1-31 (MAKKPVKDLKQLGHATPVPASPEEATLERVP). Residue C52 is the Thioimide intermediate of the active site. D59 (proton donor) is an active-site residue. Residues 74 to 76 (IES) and 93 to 94 (HE) contribute to the substrate site.

The protein belongs to the GTP cyclohydrolase I family. QueF type 1 subfamily.

The protein resides in the cytoplasm. It catalyses the reaction 7-aminomethyl-7-carbaguanine + 2 NADP(+) = 7-cyano-7-deazaguanine + 2 NADPH + 3 H(+). The protein operates within tRNA modification; tRNA-queuosine biosynthesis. In terms of biological role, catalyzes the NADPH-dependent reduction of 7-cyano-7-deazaguanine (preQ0) to 7-aminomethyl-7-deazaguanine (preQ1). The sequence is that of NADPH-dependent 7-cyano-7-deazaguanine reductase from Parvibaculum lavamentivorans (strain DS-1 / DSM 13023 / NCIMB 13966).